Here is a 225-residue protein sequence, read N- to C-terminus: ATP-dependent dethiobiotin synthetase BioD 1 (225 aa).

Residues Glu13 and Thr17 each contribute to the Mg(2+) site. 13 to 18 (EVGKTV) provides a ligand contact to ATP. Lys38 is a catalytic residue. Residue Ser42 participates in substrate binding. Mg(2+)-binding residues include Asp55 and Glu116. ATP contacts are provided by residues Asp55, 116 to 119 (EGAG), and 176 to 177 (ND). Residue Tyr188 coordinates substrate. ATP contacts are provided by residues 205-207 (PWL) and Glu212.

This sequence belongs to the dethiobiotin synthetase family. Homodimer. It depends on Mg(2+) as a cofactor.

It localises to the cytoplasm. The catalysed reaction is (7R,8S)-7,8-diammoniononanoate + CO2 + ATP = (4R,5S)-dethiobiotin + ADP + phosphate + 3 H(+). The protein operates within cofactor biosynthesis; biotin biosynthesis; biotin from 7,8-diaminononanoate: step 1/2. Functionally, catalyzes a mechanistically unusual reaction, the ATP-dependent insertion of CO2 between the N7 and N8 nitrogen atoms of 7,8-diaminopelargonic acid (DAPA, also called 7,8-diammoniononanoate) to form a ureido ring. Only CTP can partially replace ATP while diaminobiotin is only 37% as effective as 7,8-diaminopelargonic acid. In another study both CTP and GTP (but not ITP, TTP or UTP) can partially replace ATP. The sequence is that of ATP-dependent dethiobiotin synthetase BioD 1 from Escherichia coli (strain K12).